A 471-amino-acid chain; its full sequence is Zinc finger protein 385B (471 aa).

The required for induction of apoptosis stretch occupies residues 1–93 (MNMANFLRGF…TGSTCHTTTL (93 aa)). Residues 34–64 (SFCEVCNIQLNSAAQAQVHSNGKSHRKRVKQ) form a Matrin-type 1 zinc finger. 2 disordered regions span residues 50 to 92 (QVHS…HTTT) and 175 to 275 (HYKG…TVVE). Positions 76-92 (ASPSSNSSTGSTCHTTT) are enriched in low complexity. Residues 94–471 (PALVRTPTLM…TPASILFAPY (378 aa)) form an interaction with p53/TP53 region. Residues 157 to 187 (ISCNVCQLRFNSDSQAEAHYKGSKHAKKVKA) form a Matrin-type 2 zinc finger. A compositionally biased stretch (polar residues) spans 206–220 (ANPSCSITPITGNNS). Over residues 230–250 (KASSSSQPSSSESGSFLLKSG) the composition is skewed to low complexity. Residues 260 to 269 (TSPSKSTNGA) show a composition bias toward polar residues. The Matrin-type 3 zinc finger occupies 282–316 (KKLLYCSLCKVAVNSLSQLEAHNTGSKHKTMVEAR). Positions 318-340 (GAGPIKSYPRPGSRLKMQNGSKG) are disordered. The Matrin-type 4 zinc-finger motif lies at 348-378 (FHCEICDVHVNSEIQLKQHISSRRHKDRVAG).

Interacts with p53/TP53; the interaction is direct. As to expression, detected in germinal center of lymph node (at protein level). Expressed in spleen, lymph node and tonsil.

It localises to the nucleus. Functionally, may play a role in p53/TP53-mediated apoptosis. The protein is Zinc finger protein 385B (ZNF385B) of Homo sapiens (Human).